The following is a 35-amino-acid chain: Photosystem II reaction center protein T (35 aa).

Residues Ala-3–Phe-23 traverse the membrane as a helical segment.

It belongs to the PsbT family. As to quaternary structure, PSII is composed of 1 copy each of membrane proteins PsbA, PsbB, PsbC, PsbD, PsbE, PsbF, PsbH, PsbI, PsbJ, PsbK, PsbL, PsbM, PsbT, PsbY, PsbZ, Psb30/Ycf12, at least 3 peripheral proteins of the oxygen-evolving complex and a large number of cofactors. It forms dimeric complexes.

The protein localises to the plastid. It localises to the chloroplast thylakoid membrane. Its function is as follows. Found at the monomer-monomer interface of the photosystem II (PS II) dimer, plays a role in assembly and dimerization of PSII. PSII is a light-driven water plastoquinone oxidoreductase, using light energy to abstract electrons from H(2)O, generating a proton gradient subsequently used for ATP formation. The protein is Photosystem II reaction center protein T of Chaetosphaeridium globosum (Charophycean green alga).